Consider the following 132-residue polypeptide: Small ribosomal subunit protein uS13 (132 aa).

The span at 101–125 (RGLPVRGQRTKTNARTRKGPRKTVA) shows a compositional bias: basic residues. The interval 101–132 (RGLPVRGQRTKTNARTRKGPRKTVANKKIETR) is disordered.

Belongs to the universal ribosomal protein uS13 family. Part of the 30S ribosomal subunit. Forms a loose heterodimer with protein S19. Forms two bridges to the 50S subunit in the 70S ribosome.

In terms of biological role, located at the top of the head of the 30S subunit, it contacts several helices of the 16S rRNA. In the 70S ribosome it contacts the 23S rRNA (bridge B1a) and protein L5 of the 50S subunit (bridge B1b), connecting the 2 subunits; these bridges are implicated in subunit movement. Contacts the tRNAs in the A and P-sites. The protein is Small ribosomal subunit protein uS13 of Ureaplasma urealyticum serovar 10 (strain ATCC 33699 / Western).